Here is a 99-residue protein sequence, read N- to C-terminus: Small ribosomal subunit protein uS19c (99 aa).

It belongs to the universal ribosomal protein uS19 family.

The protein localises to the plastid. It is found in the chloroplast. Its function is as follows. Protein S19 forms a complex with S13 that binds strongly to the 16S ribosomal RNA. The protein is Small ribosomal subunit protein uS19c of Oenothera biennis (German evening primrose).